Reading from the N-terminus, the 109-residue chain is Small ribosomal subunit protein bS6 (109 aa).

Belongs to the bacterial ribosomal protein bS6 family.

In terms of biological role, binds together with bS18 to 16S ribosomal RNA. The protein is Small ribosomal subunit protein bS6 of Dehalococcoides mccartyi (strain ATCC BAA-2266 / KCTC 15142 / 195) (Dehalococcoides ethenogenes (strain 195)).